The following is a 173-amino-acid chain: Crossover junction endodeoxyribonuclease RuvC (173 aa).

Residues aspartate 8, glutamate 67, and aspartate 139 contribute to the active site. Residues aspartate 8, glutamate 67, and aspartate 139 each coordinate Mg(2+).

This sequence belongs to the RuvC family. Homodimer which binds Holliday junction (HJ) DNA. The HJ becomes 2-fold symmetrical on binding to RuvC with unstacked arms; it has a different conformation from HJ DNA in complex with RuvA. In the full resolvosome a probable DNA-RuvA(4)-RuvB(12)-RuvC(2) complex forms which resolves the HJ. Mg(2+) serves as cofactor.

The protein resides in the cytoplasm. The enzyme catalyses Endonucleolytic cleavage at a junction such as a reciprocal single-stranded crossover between two homologous DNA duplexes (Holliday junction).. In terms of biological role, the RuvA-RuvB-RuvC complex processes Holliday junction (HJ) DNA during genetic recombination and DNA repair. Endonuclease that resolves HJ intermediates. Cleaves cruciform DNA by making single-stranded nicks across the HJ at symmetrical positions within the homologous arms, yielding a 5'-phosphate and a 3'-hydroxyl group; requires a central core of homology in the junction. The consensus cleavage sequence is 5'-(A/T)TT(C/G)-3'. Cleavage occurs on the 3'-side of the TT dinucleotide at the point of strand exchange. HJ branch migration catalyzed by RuvA-RuvB allows RuvC to scan DNA until it finds its consensus sequence, where it cleaves and resolves the cruciform DNA. The sequence is that of Crossover junction endodeoxyribonuclease RuvC from Baumannia cicadellinicola subsp. Homalodisca coagulata.